The sequence spans 333 residues: MEKFSVTVIGAGVYGTAIAVAIAKHGNMVLLWGHNSQHIKILKIDRSNQVDLPGVFFPDSLYVEESLSVAADFSQNILIAVPSHVFRCVLLKLRLNLKNNFRIIIASKGLEPKTGWLLQDVVYDVLGKEVPCAVISGPTFAHELAIGLPAAIELASADIKFRYDIEHLLYSVKNLRVYKTTDVIGVQIAGAVKNVIAIGVGISDGMGFGANARAALITRGLSEMIRLGKSIGAISVDVFVGLAGLGDLVLTCTDDQSRNRRFGMLLGQGMHVDYAQKSIGQLIEGISNTKEVYMLSVKYKVIMPITEQIYKILYENKNVHEAVYSLIRRSYIL.

Residues Y14, H34, and K108 each contribute to the NADPH site. The sn-glycerol 3-phosphate site is built by K108, G137, and T139. Residue A141 participates in NADPH binding. Sn-glycerol 3-phosphate-binding residues include K193, D247, S257, R258, and N259. Catalysis depends on K193, which acts as the Proton acceptor. Residue R258 coordinates NADPH. Positions 282 and 284 each coordinate NADPH.

Belongs to the NAD-dependent glycerol-3-phosphate dehydrogenase family.

It is found in the cytoplasm. The catalysed reaction is sn-glycerol 3-phosphate + NAD(+) = dihydroxyacetone phosphate + NADH + H(+). It carries out the reaction sn-glycerol 3-phosphate + NADP(+) = dihydroxyacetone phosphate + NADPH + H(+). Its pathway is membrane lipid metabolism; glycerophospholipid metabolism. Its function is as follows. Catalyzes the reduction of the glycolytic intermediate dihydroxyacetone phosphate (DHAP) to sn-glycerol 3-phosphate (G3P), the key precursor for phospholipid synthesis. The protein is Glycerol-3-phosphate dehydrogenase [NAD(P)+] of Blochmanniella floridana.